Reading from the N-terminus, the 504-residue chain is Maturase K (504 aa).

Belongs to the intron maturase 2 family. MatK subfamily.

The protein resides in the plastid. It is found in the chloroplast. Its function is as follows. Usually encoded in the trnK tRNA gene intron. Probably assists in splicing its own and other chloroplast group II introns. This chain is Maturase K, found in Carpinus betulus (European hornbeam).